Reading from the N-terminus, the 336-residue chain is 3-isopropylmalate dehydrogenase (336 aa).

Substrate contacts are provided by Arg-87, Arg-97, Arg-121, and Asp-211. 3 residues coordinate Mg(2+): Asp-211, Asp-235, and Asp-239. 271 to 283 (GSAPDIAGQGIAD) contributes to the NAD(+) binding site.

It belongs to the isocitrate and isopropylmalate dehydrogenases family. LeuB type 2 subfamily. Homodimer. Mg(2+) is required as a cofactor. It depends on Mn(2+) as a cofactor.

It localises to the cytoplasm. It carries out the reaction (2R,3S)-3-isopropylmalate + NAD(+) = 4-methyl-2-oxopentanoate + CO2 + NADH. It participates in amino-acid biosynthesis; L-leucine biosynthesis; L-leucine from 3-methyl-2-oxobutanoate: step 3/4. In terms of biological role, catalyzes the oxidation of 3-carboxy-2-hydroxy-4-methylpentanoate (3-isopropylmalate) to 3-carboxy-4-methyl-2-oxopentanoate. The product decarboxylates to 4-methyl-2 oxopentanoate. This Mycolicibacterium vanbaalenii (strain DSM 7251 / JCM 13017 / BCRC 16820 / KCTC 9966 / NRRL B-24157 / PYR-1) (Mycobacterium vanbaalenii) protein is 3-isopropylmalate dehydrogenase.